Here is a 590-residue protein sequence, read N- to C-terminus: MKRTNYAGNITEEYLNQTITVKGWVAKRRNLGGLIFIDLRDREGIVQIVVNPETAATEVAEAADKARNEFVLEVTGKVVERASKNDKIKTGGIEIEATAIEILSTSKTTPFEIKDDVEVLDDTRLKYRYLDLRRPEMLKNITMRHATTRSIREYLDGAGFIDVETPFLNKSTPEGARDYLVPSRVNKGEFYALPQSPQLMKQLLMTAGLDRYYQIVKCFRDEDLRGDRQPEFTQVDLETSFLGEEEIQELTEELIAKVMKDVKGIDVTLPFPRMNYDDAMNFYGSDKPDTRFELLLTDLSALAKTVDFKVFQEAEVVKAIVVKGAADKYSRKSIDKLTEQAKQNGAKGLAWVKFEKGEFAGGISKFLAESTDSFVNELKLTDNDLVLFVADSLDVANSALGALRLTIGKQQGLIDFRKFNFLWVIDWPMFEWSDEEERYMSAHHPFTLPTKETQAFLSADGHRKDSDLKKVRAHAYDIVLNGYELGGGSLRINSRDLQEEMLSALGFKLEDANEQFGFLLEALDYGFPPHGGLALGLDRFVMLLAGKDNIREVIAFPKNNKASDPMTQAPSIVADKQLEELSIKLANKDQ.

Residue glutamate 174 participates in L-aspartate binding. Residues 198–201 (QLMK) form an aspartate region. An L-aspartate-binding site is contributed by arginine 220. Residues 220–222 (RDE) and glutamine 229 contribute to the ATP site. An L-aspartate-binding site is contributed by histidine 443. ATP is bound at residue glutamate 484. Arginine 491 is a binding site for L-aspartate. 536–539 (GLDR) contacts ATP.

Belongs to the class-II aminoacyl-tRNA synthetase family. Type 1 subfamily. Homodimer.

It localises to the cytoplasm. The enzyme catalyses tRNA(Asp) + L-aspartate + ATP = L-aspartyl-tRNA(Asp) + AMP + diphosphate. Its function is as follows. Catalyzes the attachment of L-aspartate to tRNA(Asp) in a two-step reaction: L-aspartate is first activated by ATP to form Asp-AMP and then transferred to the acceptor end of tRNA(Asp). This Lactococcus lactis subsp. cremoris (strain SK11) protein is Aspartate--tRNA ligase.